The following is a 279-amino-acid chain: Proto-oncogene FRAT1 (279 aa).

Disordered stretches follow at residues 1–24 (MPCR…EEDS) and 56–76 (AQHS…APGP). A compositionally biased stretch (acidic residues) spans 7 to 24 (EEEEAGEEAEGEEEEEDS). At S88 the chain carries Phosphoserine. Disordered regions lie at residues 136–200 (GPSA…DDPH) and 228–279 (RAKL…VPGS). Positions 198-220 (DPHRLLQQLVLSGNLIKEAVRRL) are involved in GSK-3 binding. Residues S249 and S252 each carry the phosphoserine modification.

It belongs to the GSK-3-binding protein family. As to quaternary structure, binds DVL1. Binds GSK-3 and prevent GSK-3-dependent phosphorylation. Phosphorylated.

It is found in the cytoplasm. Positively regulates the Wnt signaling pathway by stabilizing beta-catenin through the association with GSK-3. May play a role in tumor progression and collaborate with PIM1 and MYC in lymphomagenesis. This is Proto-oncogene FRAT1 (FRAT1) from Homo sapiens (Human).